Here is a 377-residue protein sequence, read N- to C-terminus: Homocitrate synthase 1 (377 aa).

The Pyruvate carboxyltransferase domain maps to 4–255 (VLINDTTLRD…DMGIDTPRLL (252 aa)).

It belongs to the alpha-IPM synthase/homocitrate synthase family.

The enzyme catalyses acetyl-CoA + 2-oxoglutarate + H2O = (2R)-homocitrate + CoA + H(+). Functionally, this protein is a Fe-Mo-cofactor biosynthetic component. This is Homocitrate synthase 1 (nifV1) from Nostoc sp. (strain PCC 7120 / SAG 25.82 / UTEX 2576).